We begin with the raw amino-acid sequence, 256 residues long: uncharacterized protein (256 aa).

Transmembrane regions (helical) follow at residues Ile-32–Phe-52, Phe-59–Gly-79, Tyr-112–Phe-132, Leu-156–Ser-176, Leu-184–Ala-204, Cys-207–Val-227, and Leu-230–Tyr-250.

It belongs to the FNT transporter (TC 1.A.16) family.

It localises to the cell membrane. This is an uncharacterized protein from Bacillus subtilis (strain 168).